Here is a 414-residue protein sequence, read N- to C-terminus: MLRRLVISIMLGMVSALIVWLFHQAMLGLEWLLFSRTDGSLVAAAASITGWRRALTPALGGLAAGLLLWAYQRYQHRKPSAPTDYMEAIEIGDGRLDVSASLVKSLASLLVVSSGSAIGREGAMVLLAALFASVFAQRYAKPKEWKLWVACGAAAGMASAYHAPLAGSLFIAEILFGTLMLASLGPVVIAAVSALLTINLLQGGQETLYQVQTLPSPWPVQYFLMALLGLMAGFSGPLFLKAMAASSHAFRSLNLLPPLQLALGGIIVGLLSLIFPEVWGNGYSVVQSLLTTPPGVLLIGGILICKLLAVLASSGSGAPGGVFTPTLFVGAALGMLCGQIFSLWPVLGDNIGLLMALTGMATLLAATTHAPIMAALMVCEMTGEYTLLPGLLLSCVIATTIARWLRPISVYRSH.

11 consecutive transmembrane segments (helical) span residues 5 to 25 (LVIS…FHQA), 54 to 74 (ALTP…YQRY), 116 to 136 (SAIG…SVFA), 147 to 167 (LWVA…PLAG), 169 to 189 (LFIA…PVVI), 220 to 240 (VQYF…PLFL), 255 to 275 (LLPP…SLIF), 292 to 312 (TPPG…AVLA), 327 to 347 (LFVG…WPVL), 353 to 373 (LLMA…APIM), and 381 to 401 (MTGE…ATTI).

This sequence belongs to the chloride channel (TC 2.A.49) family. ClcB subfamily.

The protein resides in the cell inner membrane. Its function is as follows. Probably acts as an electrical shunt for an outwardly-directed proton pump that is linked to amino acid decarboxylation, as part of the extreme acid resistance (XAR) response. The protein is Voltage-gated ClC-type chloride channel ClcB of Yersinia pestis.